Reading from the N-terminus, the 177-residue chain is Thymidine kinase (177 aa).

Residue 11 to 18 coordinates ATP; the sequence is GPMFSGKS. The active-site Proton acceptor is the Glu83. Phe113 is a binding site for substrate. Zn(2+) contacts are provided by Cys138 and Cys141. 157–161 lines the substrate pocket; that stretch reads IEIIG. Residues Cys170 and Cys173 each coordinate Zn(2+).

This sequence belongs to the thymidine kinase family. As to quaternary structure, homotetramer. Two molecules of substrate bind to each enzyme tetramer.

The enzyme catalyses thymidine + ATP = dTMP + ADP + H(+). Its function is as follows. Phosphorylates thymidine and thymidine analogs, such as azidothymidine (AZT). Part of the salvage pathway for pyrimidine deoxyribonucleotide synthesis. The chain is Thymidine kinase (OPG101) from Homo sapiens (Human).